A 65-amino-acid chain; its full sequence is Large ribosomal subunit protein uL29 (65 aa).

This sequence belongs to the universal ribosomal protein uL29 family.

This is Large ribosomal subunit protein uL29 from Lactobacillus acidophilus (strain ATCC 700396 / NCK56 / N2 / NCFM).